A 522-amino-acid polypeptide reads, in one-letter code: MEGFTREAPCFPILGDNWDCENQERNLRQSPLIDEKTEAQEANCGHVNLGEHLSTNPALLPSQRVPGTNGFHVFNSDIKTFDCDQTLHSCPPSYAVKGTADGDACEKATQPSMEATQLVRNQMREKSYKYTESVKSLNHFTTALCDKKIKKRSKRFYKGKDFGDILALSSSLNEKRSHSAEKPYKCAECGKCFKRNSSLVLHHRTHTGEKPYTCNDCGKSFSKNYNLIVHRRIHTGEKPYKCSKCGKAFSDGSALTQHQRIHTGEKPYACLDCGKTFNRNSSLILHQRTHTGEKPYRCNECGKPFTDISHLTVHLRIHTGEKPYECSRCGKAFRDGSYLTQHERTHTGEKPFECVECGKSFSRNSHLIVHQKIHSGEKPYECKECGKTFIESAYLIRHQRVHTGEKPYGCNQCRKLFRNIAGLIRHQRIHTGERPYECNQCGKAFRDSSCLTKHQRIHTKETPYQCLKCGKSFRQNTHLVVHQRLHNREGPSQCPHCGKIFRRSWCLARHQRTHLEEQPTET.

At Ser-30 the chain carries Phosphoserine. 12 consecutive C2H2-type zinc fingers follow at residues 184–206, 212–234, 240–262, 268–290, 296–318, 324–346, 352–374, 380–402, 408–430, 436–458, 464–486, and 492–514; these read YKCA…HRTH, YTCN…RRIH, YKCS…QRIH, YACL…QRTH, YRCN…LRIH, YECS…ERTH, FECV…QKIH, YECK…QRVH, YGCN…QRIH, YECN…QRIH, YQCL…QRLH, and SQCP…QRTH.

It belongs to the krueppel C2H2-type zinc-finger protein family.

Its subcellular location is the nucleus. Its function is as follows. May be involved in transcriptional regulation. The chain is Zinc finger protein 329 (Znf329) from Mus musculus (Mouse).